A 550-amino-acid polypeptide reads, in one-letter code: Glucose-6-phosphate isomerase (550 aa).

D-glucose 6-phosphate is bound by residues 164-165, 215-220, Gln-359, Glu-363, and His-394; these read GS and SKTFTT. The active-site Proton donor is Glu-363. The active site involves His-394. The residue at position 455 (Thr-455) is a Phosphothreonine. Lys-516 contacts D-glucose 6-phosphate. Lys-516 is an active-site residue.

It belongs to the GPI family. As to quaternary structure, homodimer.

The protein localises to the cytoplasm. It is found in the cytosol. It catalyses the reaction alpha-D-glucose 6-phosphate = beta-D-fructose 6-phosphate. Its pathway is carbohydrate degradation; glycolysis; D-glyceraldehyde 3-phosphate and glycerone phosphate from D-glucose: step 2/4. In the cytoplasm, catalyzes the conversion of glucose-6-phosphate to fructose-6-phosphate, the second step in glycolysis, and the reverse reaction during gluconeogenesis. In Schizosaccharomyces pombe (strain 972 / ATCC 24843) (Fission yeast), this protein is Glucose-6-phosphate isomerase (pgi1).